Here is a 192-residue protein sequence, read N- to C-terminus: Orotate phosphoribosyltransferase (192 aa).

Position 116 to 124 (116 to 124) interacts with 5-phospho-alpha-D-ribose 1-diphosphate; sequence EDIVTTGLS. Orotate-binding residues include T120 and R148.

Belongs to the purine/pyrimidine phosphoribosyltransferase family. PyrE subfamily. In terms of assembly, homodimer. It depends on Mg(2+) as a cofactor.

It catalyses the reaction orotidine 5'-phosphate + diphosphate = orotate + 5-phospho-alpha-D-ribose 1-diphosphate. Its pathway is pyrimidine metabolism; UMP biosynthesis via de novo pathway; UMP from orotate: step 1/2. Its function is as follows. Catalyzes the transfer of a ribosyl phosphate group from 5-phosphoribose 1-diphosphate to orotate, leading to the formation of orotidine monophosphate (OMP). The polypeptide is Orotate phosphoribosyltransferase (Bartonella bacilliformis (strain ATCC 35685 / KC583 / Herrer 020/F12,63)).